The sequence spans 669 residues: Armadillo repeat-containing protein gudu (669 aa).

Positions 1 to 10 (MIGTSSGTSH) are enriched in polar residues. Residues 1-53 (MIGTSSGTSHNRSRKKKEQCGSCPNRFSKDKRQVAAEDSDTTEVESSTDEEER) are disordered. Positions 37 to 51 (EDSDTTEVESSTDEE) are enriched in acidic residues. ARM repeat units follow at residues 100-139 (QINQ…DITL), 141-180 (IDIR…NVCK), 240-279 (KHNM…KCSS), 281-320 (PKFQ…KCAF), 322-365 (GTTR…MCAV), 367-406 (DANV…ECVR), 408-447 (QSNR…ECAE), 492-531 (DSAE…TIAQ), 574-613 (GNNT…KLSM), and 615-654 (PQNC…NIRE).

Highly expressed in testis.

Its function is as follows. Important for spermatogenesis where it may have a role in sperm individualization. This chain is Armadillo repeat-containing protein gudu, found in Drosophila melanogaster (Fruit fly).